Reading from the N-terminus, the 504-residue chain is Bacterial leucyl aminopeptidase (504 aa).

Positions 1-21 (MKYTKTLLAMVLSATFCQAYA) are cleaved as a signal peptide. Residues 22 to 106 (EDKVWISIGA…AMPTTLASFV (85 aa)) constitute a propeptide that is removed on maturation. Zn(2+) is bound by residues histidine 203, aspartate 223, glutamate 258, and aspartate 285. Cysteine 329 and cysteine 333 are oxidised to a cystine. Histidine 362 serves as a coordination point for Zn(2+). Residues 406–504 (LEDGVPVTDL…SGASLKASTF (99 aa)) constitute a propeptide, removed in mature form.

This sequence belongs to the peptidase M28 family. M28E subfamily. Zn(2+) is required as a cofactor.

The protein localises to the secreted. It catalyses the reaction Release of an N-terminal amino acid, preferentially leucine, but not glutamic or aspartic acids.. The sequence is that of Bacterial leucyl aminopeptidase from Vibrio proteolyticus (Aeromonas proteolytica).